Here is a 184-residue protein sequence, read N- to C-terminus: Endoribonuclease YbeY (184 aa).

Positions 118, 122, and 128 each coordinate Zn(2+).

The protein belongs to the endoribonuclease YbeY family. It depends on Zn(2+) as a cofactor.

Its subcellular location is the cytoplasm. Functionally, single strand-specific metallo-endoribonuclease involved in late-stage 70S ribosome quality control and in maturation of the 3' terminus of the 16S rRNA. This chain is Endoribonuclease YbeY, found in Nocardia farcinica (strain IFM 10152).